The following is a 645-amino-acid chain: MEGPTHPKPFKDKTFSWDLIILVGVVRVLLRLDVGMANPSPHQVYNVTWVITNVQTNSQANATSMLGTLTDAYPTLHVDLCDLVGDTWEPIVLDPSNVKHGARYSSSKYGCKTTDRKKQQQTYPFYVCPGHAPSMGPKGTHCGGAHDGFCAAWGCETTGEAWWKPTSSWDYITVKRGSSQDTSCDKNCNPLVLQFTQKGRQASWDGPKLWGLRLYRTGYDPIALFSVSRQVSTIMPPQAMGPNLVLPEQKPPSRQSQTKSKVATQKPQTNGTTPRSVAPATMSPKRIGTRDRLINLVQGTYLALNATDPNKTKDCWLCLVSRPPYYEGIAILGNYSNQTNPPPSCLSTPQHKLTISEVSGQGLCIGTVPRTHQALCNKTQQGHTGAHYLAAPNGTYWACNTGLTPCISMAVLNWTSDFCVLIELWPRVTYHQPEYIYTHFDKAVRFRREPISLTVALMLGGLTVGGIAAGVGTGTKALLETAQFRQLQIAMHTDIQALEESISALEKSLTSLSEVVLQNRRGLDILFLQGGGLCAALKEECCFYADHTGLVRDNMAKLRERLKQRQQLFDSQQGWFEGWFNKSPWFTTLISSIMGPLLILLLILLFGPCILNRLVQFVKDRISVVQALILTQQYQQIQQYDPDRP.

Positions 1 to 36 are cleaved as a signal peptide; it reads MEGPTHPKPFKDKTFSWDLIILVGVVRVLLRLDVGM. Residues 37–589 are Extracellular-facing; the sequence is ANPSPHQVYN…FNKSPWFTTL (553 aa). Residues Asn-46 and Asn-61 are each glycosylated (N-linked (GlcNAc...) asparagine; by host). Intrachain disulfides connect Cys-128/Cys-150 and Cys-142/Cys-155. A disordered region spans residues 238–283; it reads QAMGPNLVLPEQKPPSRQSQTKSKVATQKPQTNGTTPRSVAPATMS. The span at 252-275 shows a compositional bias: polar residues; the sequence is PSRQSQTKSKVATQKPQTNGTTPR. Residues Asn-270, Asn-305, and Asn-310 are each glycosylated (N-linked (GlcNAc...) asparagine; by host). Cystine bridges form between Cys-315–Cys-318, Cys-315–Cys-542, and Cys-534–Cys-541. A CXXC motif is present at residues 315-318; it reads CWLC. Residues Asn-334, Asn-337, Asn-377, Asn-393, and Asn-413 are each glycosylated (N-linked (GlcNAc...) asparagine; by host). Residues 451-471 form a fusion peptide region; sequence ISLTVALMLGGLTVGGIAAGV. Coiled-coil stretches lie at residues 479–528 and 538–574; these read LETA…ILFL and KEECCFYADHTGLVRDNMAKLRERLKQRQQLFDSQQG. An immunosuppression region spans residues 517-533; the sequence is LQNRRGLDILFLQGGGL. Residues 534 to 542 carry the CX6CC motif; that stretch reads CAALKEECC. The helical transmembrane segment at 590–610 threads the bilayer; sequence ISSIMGPLLILLLILLFGPCI. Cys-609 carries the S-palmitoyl cysteine; by host lipid modification. At 611-645 the chain is on the cytoplasmic side; that stretch reads LNRLVQFVKDRISVVQALILTQQYQQIQQYDPDRP.

As to quaternary structure, the mature envelope protein (Env) consists of a trimer of SU-TM heterodimers attached by a labile interchain disulfide bond. Specific enzymatic cleavages in vivo yield mature proteins. Envelope glycoproteins are synthesized as an inactive precursor that is N-glycosylated and processed likely by host cell furin or by a furin-like protease in the Golgi to yield the mature SU and TM proteins. The cleavage site between SU and TM requires the minimal sequence [KR]-X-[KR]-R. The R-peptide is released from the C-terminus of the cytoplasmic tail of the TM protein upon particle formation as a result of proteolytic cleavage by the viral protease. Cleavage of this peptide is required for TM to become fusogenic. In terms of processing, the CXXC motif is highly conserved across a broad range of retroviral envelope proteins. It is thought to participate in the formation of a labile disulfide bond possibly with the CX6CC motif present in the transmembrane protein. Isomerization of the intersubunit disulfide bond to an SU intrachain disulfide bond is thought to occur upon receptor recognition in order to allow membrane fusion. Post-translationally, the transmembrane protein is palmitoylated. The R-peptide is palmitoylated.

It localises to the virion membrane. Its subcellular location is the host cell membrane. In terms of biological role, the surface protein (SU) attaches the virus to the host cell by binding to its receptor. This interaction triggers the refolding of the transmembrane protein (TM) and is thought to activate its fusogenic potential by unmasking its fusion peptide. Fusion occurs at the host cell plasma membrane. Functionally, the transmembrane protein (TM) acts as a class I viral fusion protein. Under the current model, the protein has at least 3 conformational states: pre-fusion native state, pre-hairpin intermediate state, and post-fusion hairpin state. During viral and target cell membrane fusion, the coiled coil regions (heptad repeats) assume a trimer-of-hairpins structure, positioning the fusion peptide in close proximity to the C-terminal region of the ectodomain. The formation of this structure appears to drive apposition and subsequent fusion of viral and target cell membranes. Membranes fusion leads to delivery of the nucleocapsid into the cytoplasm. This is Envelope glycoprotein (env) from Feline sarcoma virus (strain SM) (Sm-FeSV).